Consider the following 330-residue polypeptide: Ribosomal RNA small subunit methyltransferase H (330 aa).

S-adenosyl-L-methionine is bound by residues 51-53 (GGH), Asp-70, Asp-118, and Gln-125. The interval 276–330 (STDSTPPGLPVPLPDRQPELRLLTRGAELPTEQETAANPRAASARLRAAERTREP) is disordered. Positions 311–321 (AANPRAASARL) are enriched in low complexity.

This sequence belongs to the methyltransferase superfamily. RsmH family.

It localises to the cytoplasm. The catalysed reaction is cytidine(1402) in 16S rRNA + S-adenosyl-L-methionine = N(4)-methylcytidine(1402) in 16S rRNA + S-adenosyl-L-homocysteine + H(+). In terms of biological role, specifically methylates the N4 position of cytidine in position 1402 (C1402) of 16S rRNA. This Thermobifida fusca (strain YX) protein is Ribosomal RNA small subunit methyltransferase H.